The chain runs to 194 residues: Holliday junction branch migration complex subunit RuvA (194 aa).

Residues 1-64 (MIGRLRGILA…EDSVSLYGFL (64 aa)) form a domain I region. The interval 65-140 (REGERRLFRD…RAADFSSGAP (76 aa)) is domain II. The interval 140–144 (PITGQ) is flexible linker. The domain III stretch occupies residues 145–194 (LGPDAISEATVALQQLGYKPAEAARMARDAGAEGGEVATVIRKALQAALR).

Belongs to the RuvA family. As to quaternary structure, homotetramer. Forms an RuvA(8)-RuvB(12)-Holliday junction (HJ) complex. HJ DNA is sandwiched between 2 RuvA tetramers; dsDNA enters through RuvA and exits via RuvB. An RuvB hexamer assembles on each DNA strand where it exits the tetramer. Each RuvB hexamer is contacted by two RuvA subunits (via domain III) on 2 adjacent RuvB subunits; this complex drives branch migration. In the full resolvosome a probable DNA-RuvA(4)-RuvB(12)-RuvC(2) complex forms which resolves the HJ.

It is found in the cytoplasm. Functionally, the RuvA-RuvB-RuvC complex processes Holliday junction (HJ) DNA during genetic recombination and DNA repair, while the RuvA-RuvB complex plays an important role in the rescue of blocked DNA replication forks via replication fork reversal (RFR). RuvA specifically binds to HJ cruciform DNA, conferring on it an open structure. The RuvB hexamer acts as an ATP-dependent pump, pulling dsDNA into and through the RuvAB complex. HJ branch migration allows RuvC to scan DNA until it finds its consensus sequence, where it cleaves and resolves the cruciform DNA. This Xanthomonas oryzae pv. oryzae (strain MAFF 311018) protein is Holliday junction branch migration complex subunit RuvA.